The sequence spans 105 residues: L-rhamnose mutarotase (105 aa).

Tyr19 contributes to the substrate binding site. The Proton donor role is filled by His23. Residues Tyr42 and 77 to 78 (WW) each bind substrate.

This sequence belongs to the rhamnose mutarotase family. In terms of assembly, homodimer.

Its subcellular location is the cytoplasm. The enzyme catalyses alpha-L-rhamnose = beta-L-rhamnose. Its pathway is carbohydrate metabolism; L-rhamnose metabolism. Functionally, involved in the anomeric conversion of L-rhamnose. This chain is L-rhamnose mutarotase, found in Mesorhizobium japonicum (strain LMG 29417 / CECT 9101 / MAFF 303099) (Mesorhizobium loti (strain MAFF 303099)).